We begin with the raw amino-acid sequence, 251 residues long: MSLKSLIAATILAAPLVAGHGAIIKAVGDAGGEGMGLGVVTSTPRDGTRRDPFQQDSTRFKGQQADTFGETVGGGQNDVESMTKAIMAETGSQLPQISPGGSLQMTLHQVNGDGAGPYTCELNDDASGAQWQQIRVTTTPPGRNSRNRDGAMTDFPLVAEIPQRQACTGTVAGQTNVCLVRCMNAARAGPFGGVVAAQLAGSQTPQAARRALAESVKRSELIVSGLKKRGYNIADLSQEEIDELRRDGEIA.

Residues 1-21 form the signal peptide; it reads MSLKSLIAATILAAPLVAGHG. Positions 40 to 76 are disordered; sequence VTSTPRDGTRRDPFQQDSTRFKGQQADTFGETVGGGQ. Over residues 54 to 66 the composition is skewed to polar residues; the sequence is QQDSTRFKGQQAD.

It localises to the cytoplasm. Appressoria-specific virulence factor required for appressorial penetration in host and lesion development. This chain is Appressoria-specific virulence factor GAS1, found in Pyricularia oryzae (strain 70-15 / ATCC MYA-4617 / FGSC 8958) (Rice blast fungus).